Here is a 349-residue protein sequence, read N- to C-terminus: Nuclear distribution protein nudE homolog 1-B (349 aa).

The stretch at 22-189 (VAMKYKQCSE…ELAVQQKQEK (168 aa)) forms a coiled coil.

Belongs to the nudE family. Self-associates. Interacts with pafah1b1. In terms of processing, phosphorylated in mitosis.

It is found in the cytoplasm. Its subcellular location is the cytoskeleton. It localises to the microtubule organizing center. The protein localises to the centrosome. The protein resides in the spindle. It is found in the chromosome. Its subcellular location is the centromere. It localises to the kinetochore. The protein localises to the cleavage furrow. The protein resides in the cytoplasmic vesicle membrane. Required for centrosome duplication and formation and function of the mitotic spindle. This chain is Nuclear distribution protein nudE homolog 1-B (nde1-b), found in Xenopus laevis (African clawed frog).